Consider the following 143-residue polypeptide: Hemoglobin subunit alpha-1 (143 aa).

N-acetylserine is present on Ser2. A Globin domain is found at 2–143 (SLTAKDKDTV…LSRALAEKYR (142 aa)). An O2-binding site is contributed by His60. His89 contacts heme b.

The protein belongs to the globin family. As to quaternary structure, hb1 is a heterotetramer of two alpha-1 chains and two beta-1 chains. Red blood cells.

Functionally, involved in oxygen transport from gills to the various peripheral tissues. The protein is Hemoglobin subunit alpha-1 (hba1) of Anarhichas minor (Arctic spotted wolffish).